The following is a 163-amino-acid chain: Glutathione peroxidase-like peroxiredoxin HYR1 (163 aa).

The active-site Cysteine sulfenic acid (-SOH) intermediate is the C36. An intrachain disulfide couples C36 to C82.

The protein belongs to the glutathione peroxidase family. In terms of assembly, interacts with YAP1 and probably YBP1.

Its subcellular location is the cytoplasm. It localises to the mitochondrion intermembrane space. The protein resides in the peroxisome matrix. It carries out the reaction a hydroperoxide + [thioredoxin]-dithiol = an alcohol + [thioredoxin]-disulfide + H2O. Functionally, involved in oxidative stress response and redox homeostasis. Functions as a sensor and transducer of hydroperoxide stress. In response to hydroperoxide stress it oxidizes (activates) the transcription activator YAP1, which is involved in transcription activation of genes of the oxidative stress response pathway. May also play a direct role in hydroperoxide scavenging, being the most active of three closely related S.cerevisiae peroxiredoxins (GPX1, GPX2, and HYR1/GPX3) with respect to peroxide and lipid hydroperoxide reduction. The three enzymes are not required for the glutaredoxin-mediated antioxidant function. In the presence of peroxides, HYR1/GPX3 is directly oxidized at Cys-36 to form a cysteine sulfenic acid (-SOH). Cys-36-SOH then forms either an intramolecular disulfide bond (Cys-36 with Cys-82) or a transient, intermolecular disulfide bond with 'Cys-598' of YAP1, which is further resolved into a YAP1 intramolecular disulfide bond ('Cys-303' with 'Cys-598'), which causes its nuclear accumulation and activation, and a reduced Cys-36 in HYR1/GPX3. The chain is Glutathione peroxidase-like peroxiredoxin HYR1 from Saccharomyces cerevisiae (strain ATCC 204508 / S288c) (Baker's yeast).